The sequence spans 199 residues: 5'-deoxynucleotidase YfbR (199 aa).

Substrate-binding positions include 18-19 (RW) and His-33. Residues 30-142 (VSEHSLQVAM…VKQADALCAY (113 aa)) form the HD domain. Residues His-33, His-68, and Asp-69 each contribute to the a divalent metal cation site. Substrate contacts are provided by residues Asp-69, 77–80 (DLPT), and Asp-137. An a divalent metal cation-binding site is contributed by Asp-137.

The protein belongs to the 5DNU family. Homodimer. It depends on a divalent metal cation as a cofactor.

Its subcellular location is the cytoplasm. The catalysed reaction is a 2'-deoxyribonucleoside 5'-phosphate + H2O = a 2'-deoxyribonucleoside + phosphate. Functionally, catalyzes the strictly specific dephosphorylation of 2'-deoxyribonucleoside 5'-monophosphates. The chain is 5'-deoxynucleotidase YfbR from Salmonella arizonae (strain ATCC BAA-731 / CDC346-86 / RSK2980).